The following is a 316-amino-acid chain: Lipoyl synthase (316 aa).

Positions 60, 65, 71, 86, 90, 93, and 297 each coordinate [4Fe-4S] cluster. The region spanning 72 to 286 is the Radical SAM core domain; it reads WEDREATFLI…KDEADEVGFT (215 aa).

This sequence belongs to the radical SAM superfamily. Lipoyl synthase family. [4Fe-4S] cluster serves as cofactor.

The protein resides in the cytoplasm. The catalysed reaction is [[Fe-S] cluster scaffold protein carrying a second [4Fe-4S](2+) cluster] + N(6)-octanoyl-L-lysyl-[protein] + 2 oxidized [2Fe-2S]-[ferredoxin] + 2 S-adenosyl-L-methionine + 4 H(+) = [[Fe-S] cluster scaffold protein] + N(6)-[(R)-dihydrolipoyl]-L-lysyl-[protein] + 4 Fe(3+) + 2 hydrogen sulfide + 2 5'-deoxyadenosine + 2 L-methionine + 2 reduced [2Fe-2S]-[ferredoxin]. It participates in protein modification; protein lipoylation via endogenous pathway; protein N(6)-(lipoyl)lysine from octanoyl-[acyl-carrier-protein]: step 2/2. Functionally, catalyzes the radical-mediated insertion of two sulfur atoms into the C-6 and C-8 positions of the octanoyl moiety bound to the lipoyl domains of lipoate-dependent enzymes, thereby converting the octanoylated domains into lipoylated derivatives. The sequence is that of Lipoyl synthase from Nocardioides sp. (strain ATCC BAA-499 / JS614).